We begin with the raw amino-acid sequence, 259 residues long: Imidazole glycerol phosphate synthase subunit HisF (259 aa).

Catalysis depends on residues Asp-11 and Asp-130.

The protein belongs to the HisA/HisF family. As to quaternary structure, heterodimer of HisH and HisF.

It is found in the cytoplasm. It catalyses the reaction 5-[(5-phospho-1-deoxy-D-ribulos-1-ylimino)methylamino]-1-(5-phospho-beta-D-ribosyl)imidazole-4-carboxamide + L-glutamine = D-erythro-1-(imidazol-4-yl)glycerol 3-phosphate + 5-amino-1-(5-phospho-beta-D-ribosyl)imidazole-4-carboxamide + L-glutamate + H(+). Its pathway is amino-acid biosynthesis; L-histidine biosynthesis; L-histidine from 5-phospho-alpha-D-ribose 1-diphosphate: step 5/9. IGPS catalyzes the conversion of PRFAR and glutamine to IGP, AICAR and glutamate. The HisF subunit catalyzes the cyclization activity that produces IGP and AICAR from PRFAR using the ammonia provided by the HisH subunit. In Chloroflexus aurantiacus (strain ATCC 29366 / DSM 635 / J-10-fl), this protein is Imidazole glycerol phosphate synthase subunit HisF.